The primary structure comprises 79 residues: Translational regulator CsrA (79 aa).

The protein belongs to the CsrA/RsmA family. Homodimer; the beta-strands of each monomer intercalate to form a hydrophobic core, while the alpha-helices form wings that extend away from the core.

It localises to the cytoplasm. A translational regulator that binds mRNA to regulate translation initiation and/or mRNA stability. Usually binds in the 5'-UTR at or near the Shine-Dalgarno sequence preventing ribosome-binding, thus repressing translation. Its main target seems to be the major flagellin gene, while its function is anatagonized by FliW. This chain is Translational regulator CsrA, found in Helicobacter hepaticus (strain ATCC 51449 / 3B1).